The chain runs to 337 residues: Pseudouridine-5'-phosphate glycosidase (337 aa).

The active-site Proton donor is the glutamate 26. 2 residues coordinate substrate: lysine 87 and valine 107. Aspartate 139 is a Mn(2+) binding site. 141 to 143 (SAD) contacts substrate. The Nucleophile role is filled by lysine 160. A compositionally biased stretch (low complexity) spans 306–325 (SSGPQAGAGAPGAEPGPARR). Residues 306–337 (SSGPQAGAGAPGAEPGPARRTSPARAPSGEGW) form a disordered region.

It belongs to the pseudouridine-5'-phosphate glycosidase family. In terms of assembly, homotrimer. Mn(2+) serves as cofactor.

It catalyses the reaction D-ribose 5-phosphate + uracil = psi-UMP + H2O. Catalyzes the reversible cleavage of pseudouridine 5'-phosphate (PsiMP) to ribose 5-phosphate and uracil. Functions biologically in the cleavage direction, as part of a pseudouridine degradation pathway. This chain is Pseudouridine-5'-phosphate glycosidase, found in Methylobacterium nodulans (strain LMG 21967 / CNCM I-2342 / ORS 2060).